Here is an 813-residue protein sequence, read N- to C-terminus: Ribosome-releasing factor 2, mitochondrial (813 aa).

Residues 1–20 (MLRIVWKPLKIRLPVWRRYQ) constitute a mitochondrion transit peptide. In terms of domain architecture, tr-type G spans 26 to 314 (NSIRNVGIIA…AIIDYLPSPV (289 aa)). Residues 35-42 (AHIDAGKT), 99-103 (DTPGH), and 153-156 (NKMD) each bind GTP.

Belongs to the TRAFAC class translation factor GTPase superfamily. Classic translation factor GTPase family. EF-G/EF-2 subfamily.

The protein localises to the mitochondrion. Mitochondrial GTPase that mediates the disassembly of ribosomes from messenger RNA at the termination of mitochondrial protein biosynthesis. Not involved in the GTP-dependent ribosomal translocation step during translation elongation. This Schizosaccharomyces pombe (strain 972 / ATCC 24843) (Fission yeast) protein is Ribosome-releasing factor 2, mitochondrial (mef2).